The following is a 198-amino-acid chain: NAD(P)H dehydrogenase (quinone) (198 aa).

The Flavodoxin-like domain occupies 4-189 (ILVLYYSMYG…SIARYQGEYV (186 aa)). FMN contacts are provided by residues 10-15 (SMYGHI) and 78-80 (TRF). Tyrosine 12 provides a ligand contact to NAD(+). Tryptophan 98 is a substrate binding site. FMN contacts are provided by residues 113–118 (STGTGG) and histidine 133.

This sequence belongs to the WrbA family. FMN is required as a cofactor.

The enzyme catalyses a quinone + NADH + H(+) = a quinol + NAD(+). It catalyses the reaction a quinone + NADPH + H(+) = a quinol + NADP(+). In Salmonella paratyphi C (strain RKS4594), this protein is NAD(P)H dehydrogenase (quinone).